The primary structure comprises 486 residues: N-succinylglutamate 5-semialdehyde dehydrogenase (486 aa).

220-225 (GSSRTG) contacts NAD(+). Active-site residues include Glu243 and Cys277.

This sequence belongs to the aldehyde dehydrogenase family. AstD subfamily.

The enzyme catalyses N-succinyl-L-glutamate 5-semialdehyde + NAD(+) + H2O = N-succinyl-L-glutamate + NADH + 2 H(+). It functions in the pathway amino-acid degradation; L-arginine degradation via AST pathway; L-glutamate and succinate from L-arginine: step 4/5. In terms of biological role, catalyzes the NAD-dependent reduction of succinylglutamate semialdehyde into succinylglutamate. This chain is N-succinylglutamate 5-semialdehyde dehydrogenase, found in Shewanella putrefaciens (strain CN-32 / ATCC BAA-453).